The sequence spans 1073 residues: Carbamoyl phosphate synthase large chain (1073 aa).

Residues 1–402 form a carboxyphosphate synthetic domain region; it reads MPRRIDVRKV…ALQKAIRMLD (402 aa). ATP is bound by residues Arg-129, Arg-169, Gly-175, Gly-176, Lys-208, Leu-210, Glu-215, Gly-241, Val-242, His-243, Gln-284, and Glu-299. The region spanning 133–328 is the ATP-grasp 1 domain; that stretch reads RETMMKAGLP…LAYIAAKLAL (196 aa). Residues Gln-284, Glu-299, and Asn-301 each contribute to the Mg(2+) site. The Mn(2+) site is built by Gln-284, Glu-299, and Asn-301. The oligomerization domain stretch occupies residues 403–555; the sequence is IGEPGVVAGP…MSYNAYEDDE (153 aa). A carbamoyl phosphate synthetic domain region spans residues 556 to 944; that stretch reads PITTGRPRLI…LKSWLSVQGN (389 aa). The region spanning 681 to 871 is the ATP-grasp 2 domain; that stretch reads SQLLEELGIK…LMRAAAEAAL (191 aa). Residues Arg-717, Lys-756, Leu-758, Glu-763, Gly-787, Val-788, His-789, Ser-790, Gln-830, and Glu-842 each contribute to the ATP site. Mg(2+) contacts are provided by Gln-830, Glu-842, and Asn-844. The Mn(2+) site is built by Gln-830, Glu-842, and Asn-844. Positions 944-1073 constitute an MGS-like domain; that stretch reads NRIPPAGSIV…EYWGPNVEPF (130 aa). An allosteric domain region spans residues 945 to 1073; sequence RIPPAGSIVL…EYWGPNVEPF (129 aa).

This sequence belongs to the CarB family. As to quaternary structure, composed of two chains; the small (or glutamine) chain promotes the hydrolysis of glutamine to ammonia, which is used by the large (or ammonia) chain to synthesize carbamoyl phosphate. Tetramer of heterodimers (alpha,beta)4. The cofactor is Mg(2+). Requires Mn(2+) as cofactor.

It carries out the reaction hydrogencarbonate + L-glutamine + 2 ATP + H2O = carbamoyl phosphate + L-glutamate + 2 ADP + phosphate + 2 H(+). The enzyme catalyses hydrogencarbonate + NH4(+) + 2 ATP = carbamoyl phosphate + 2 ADP + phosphate + 2 H(+). The protein operates within amino-acid biosynthesis; L-arginine biosynthesis; carbamoyl phosphate from bicarbonate: step 1/1. Its pathway is pyrimidine metabolism; UMP biosynthesis via de novo pathway; (S)-dihydroorotate from bicarbonate: step 1/3. In terms of biological role, large subunit of the glutamine-dependent carbamoyl phosphate synthetase (CPSase). CPSase catalyzes the formation of carbamoyl phosphate from the ammonia moiety of glutamine, carbonate, and phosphate donated by ATP, constituting the first step of 2 biosynthetic pathways, one leading to arginine and/or urea and the other to pyrimidine nucleotides. The large subunit (synthetase) binds the substrates ammonia (free or transferred from glutamine from the small subunit), hydrogencarbonate and ATP and carries out an ATP-coupled ligase reaction, activating hydrogencarbonate by forming carboxy phosphate which reacts with ammonia to form carbamoyl phosphate. This is Carbamoyl phosphate synthase large chain from Hyperthermus butylicus (strain DSM 5456 / JCM 9403 / PLM1-5).